Consider the following 205-residue polypeptide: High frequency lysogenization protein HflD homolog (205 aa).

Belongs to the HflD family.

The protein localises to the cytoplasm. Its subcellular location is the cell inner membrane. This chain is High frequency lysogenization protein HflD homolog, found in Hahella chejuensis (strain KCTC 2396).